Consider the following 196-residue polypeptide: Ribosomal RNA large subunit methyltransferase E (196 aa).

S-adenosyl-L-methionine-binding residues include glycine 50, tryptophan 52, aspartate 70, aspartate 87, and aspartate 112. Catalysis depends on lysine 152, which acts as the Proton acceptor.

Belongs to the class I-like SAM-binding methyltransferase superfamily. RNA methyltransferase RlmE family.

The protein localises to the cytoplasm. The enzyme catalyses uridine(2552) in 23S rRNA + S-adenosyl-L-methionine = 2'-O-methyluridine(2552) in 23S rRNA + S-adenosyl-L-homocysteine + H(+). Its function is as follows. Specifically methylates the uridine in position 2552 of 23S rRNA at the 2'-O position of the ribose in the fully assembled 50S ribosomal subunit. This chain is Ribosomal RNA large subunit methyltransferase E, found in Bdellovibrio bacteriovorus (strain ATCC 15356 / DSM 50701 / NCIMB 9529 / HD100).